The sequence spans 200 residues: Holliday junction branch migration complex subunit RuvA (200 aa).

The domain I stretch occupies residues M1–P63. The domain II stretch occupies residues D64–P142. Residues P142–G146 are flexible linker. The tract at residues G147 to R200 is domain III.

The protein belongs to the RuvA family. In terms of assembly, homotetramer. Forms an RuvA(8)-RuvB(12)-Holliday junction (HJ) complex. HJ DNA is sandwiched between 2 RuvA tetramers; dsDNA enters through RuvA and exits via RuvB. An RuvB hexamer assembles on each DNA strand where it exits the tetramer. Each RuvB hexamer is contacted by two RuvA subunits (via domain III) on 2 adjacent RuvB subunits; this complex drives branch migration. In the full resolvosome a probable DNA-RuvA(4)-RuvB(12)-RuvC(2) complex forms which resolves the HJ.

The protein localises to the cytoplasm. Its function is as follows. The RuvA-RuvB-RuvC complex processes Holliday junction (HJ) DNA during genetic recombination and DNA repair, while the RuvA-RuvB complex plays an important role in the rescue of blocked DNA replication forks via replication fork reversal (RFR). RuvA specifically binds to HJ cruciform DNA, conferring on it an open structure. The RuvB hexamer acts as an ATP-dependent pump, pulling dsDNA into and through the RuvAB complex. HJ branch migration allows RuvC to scan DNA until it finds its consensus sequence, where it cleaves and resolves the cruciform DNA. The chain is Holliday junction branch migration complex subunit RuvA from Rhodococcus jostii (strain RHA1).